Consider the following 1488-residue polypeptide: Chromosome partition protein MukB (1488 aa).

An ATP-binding site is contributed by 34-41 (GGNGAGKS). Coiled-coil stretches lie at residues 326 to 418 (LEAD…QYNQ), 444 to 472 (LDTF…QTAH), and 509 to 602 (RHLA…QRAP). The segment at 666–783 (PGGAEDQRLN…SLPIFGRAAR (118 aa)) is flexible hinge. Coiled coils occupy residues 835-923 (EAEI…AKLE), 977-1116 (EMLS…AKAG), and 1209-1265 (VEAI…LQSV). The interval 1049–1074 (ADSGAEERARQRRDELHAQLSNNRSR) is disordered. The segment covering 1051-1065 (SGAEERARQRRDELH) has biased composition (basic and acidic residues).

Belongs to the SMC family. MukB subfamily. In terms of assembly, homodimerization via its hinge domain. Binds to DNA via its C-terminal region. Interacts, and probably forms a ternary complex, with MukE and MukF via its C-terminal region. The complex formation is stimulated by calcium or magnesium. Interacts with tubulin-related protein FtsZ.

Its subcellular location is the cytoplasm. The protein resides in the nucleoid. Functionally, plays a central role in chromosome condensation, segregation and cell cycle progression. Functions as a homodimer, which is essential for chromosome partition. Involved in negative DNA supercoiling in vivo, and by this means organize and compact chromosomes. May achieve or facilitate chromosome segregation by condensation DNA from both sides of a centrally located replisome during cell division. The protein is Chromosome partition protein MukB of Salmonella gallinarum (strain 287/91 / NCTC 13346).